Reading from the N-terminus, the 248-residue chain is DNA repair protein RecO (248 aa).

It belongs to the RecO family.

Its function is as follows. Involved in DNA repair and RecF pathway recombination. This Rubrobacter xylanophilus (strain DSM 9941 / JCM 11954 / NBRC 16129 / PRD-1) protein is DNA repair protein RecO.